The primary structure comprises 954 residues: Translation initiation factor IF-2 (954 aa).

Positions 56–75 (KAAAPAAPKAPAPAAESRPA) are enriched in low complexity. A disordered region spans residues 56–355 (KAAAPAAPKA…GVSVPRGDGN (300 aa)). The span at 76-87 (APAPGPAAPKAP) shows a compositional bias: pro residues. Composition is skewed to low complexity over residues 88 to 125 (APKVEAPAPAAPAASAPAAPQASSAAPAAPSTGAKPGA) and 138 to 151 (PRQGGSSQGSSAPR). Pro residues predominate over residues 241–254 (PGAPRPGGPRPTPG). Gly residues predominate over residues 269 to 322 (GRPGGGGRGPGRPGAPGTGGPGGGGGAPAGGGFGKGGRGRGGTQGAFGKGGAGR). Basic residues predominate over residues 323–332 (GKQRKSKRAK). A tr-type G domain is found at 447-618 (PRAPVVTVMG…AVLLTADAAL (172 aa)). Residues 456–463 (GHVDHGKT) form a G1 region. Residue 456–463 (GHVDHGKT) coordinates GTP. The G2 stretch occupies residues 481-485 (GITQH). A G3 region spans residues 506–509 (DTPG). GTP-binding positions include 506–510 (DTPGH) and 560–563 (NKID). A G4 region spans residues 560–563 (NKID). The segment at 596-598 (SAR) is G5.

The protein belongs to the TRAFAC class translation factor GTPase superfamily. Classic translation factor GTPase family. IF-2 subfamily.

Its subcellular location is the cytoplasm. One of the essential components for the initiation of protein synthesis. Protects formylmethionyl-tRNA from spontaneous hydrolysis and promotes its binding to the 30S ribosomal subunits. Also involved in the hydrolysis of GTP during the formation of the 70S ribosomal complex. This chain is Translation initiation factor IF-2, found in Pseudarthrobacter chlorophenolicus (strain ATCC 700700 / DSM 12829 / CIP 107037 / JCM 12360 / KCTC 9906 / NCIMB 13794 / A6) (Arthrobacter chlorophenolicus).